A 286-amino-acid chain; its full sequence is Bifunctional protein FolD (286 aa).

Residues 165 to 167 (GRS), Ser-190, and Val-231 each bind NADP(+).

It belongs to the tetrahydrofolate dehydrogenase/cyclohydrolase family. As to quaternary structure, homodimer.

The catalysed reaction is (6R)-5,10-methylene-5,6,7,8-tetrahydrofolate + NADP(+) = (6R)-5,10-methenyltetrahydrofolate + NADPH. It catalyses the reaction (6R)-5,10-methenyltetrahydrofolate + H2O = (6R)-10-formyltetrahydrofolate + H(+). It participates in one-carbon metabolism; tetrahydrofolate interconversion. Functionally, catalyzes the oxidation of 5,10-methylenetetrahydrofolate to 5,10-methenyltetrahydrofolate and then the hydrolysis of 5,10-methenyltetrahydrofolate to 10-formyltetrahydrofolate. This Bacillus cereus (strain AH187) protein is Bifunctional protein FolD.